The following is a 130-amino-acid chain: Small ribosomal subunit protein uS9 (130 aa).

The protein belongs to the universal ribosomal protein uS9 family.

This is Small ribosomal subunit protein uS9 from Shewanella halifaxensis (strain HAW-EB4).